A 58-amino-acid polypeptide reads, in one-letter code: Mu-diguetoxin-Dc1b (58 aa).

Cystine bridges form between Cys-12–Cys-26, Cys-20–Cys-40, Cys-25–Cys-54, and Cys-42–Cys-52.

It belongs to the neurotoxin 26 (DTX) family. Expressed by the venom gland.

The protein resides in the secreted. Acts by delaying the inactivation of presynaptic voltage-sensitive sodium channels (Nav). Acts against insects and cause a progressive spastic paralysis. This chain is Mu-diguetoxin-Dc1b, found in Diguetia canities (Desert bush spider).